The sequence spans 427 residues: Glucose-6-phosphate isomerase (427 aa).

The Proton donor role is filled by glutamate 281. Residues histidine 302 and lysine 417 contribute to the active site.

This sequence belongs to the GPI family.

Its subcellular location is the cytoplasm. It carries out the reaction alpha-D-glucose 6-phosphate = beta-D-fructose 6-phosphate. The protein operates within carbohydrate biosynthesis; gluconeogenesis. It participates in carbohydrate degradation; glycolysis; D-glyceraldehyde 3-phosphate and glycerone phosphate from D-glucose: step 2/4. In terms of biological role, catalyzes the reversible isomerization of glucose-6-phosphate to fructose-6-phosphate. The chain is Glucose-6-phosphate isomerase from Mycoplasmopsis pulmonis (strain UAB CTIP) (Mycoplasma pulmonis).